A 223-amino-acid polypeptide reads, in one-letter code: uncharacterized protein (223 aa).

The next 4 membrane-spanning stretches (helical) occupy residues 22–42 (LTVG…FVVV), 59–79 (GVAL…ATLI), 85–105 (IFSL…WCSM), and 164–184 (MAWA…SQAF).

Belongs to the Rht family.

Its subcellular location is the cell membrane. This is an uncharacterized protein from Escherichia coli (strain K12).